Here is a 206-residue protein sequence, read N- to C-terminus: KH domain-containing protein 3 (206 aa).

Residues 1-40 (MDTPRRFPTLVQLMQPKAMPVEVLGHLPKRFSWFHSEFLK) form an involved in RNA binding region. The region spanning 40-103 (KNPKVVRLEV…SYQEDTIKMI (64 aa)) is the KH; atypical domain. The segment covering 144-153 (GTQRSVEVRE) has biased composition (basic and acidic residues). Residues 144–206 (GTQRSVEVRE…EDTRAPVTRL (63 aa)) are disordered. Phosphothreonine is present on Thr145. The segment covering 166–183 (TGTQQSLEAANQSGTQRS) has biased composition (polar residues). Residue Ser171 is modified to Phosphoserine.

This sequence belongs to the KHDC1 family. As to quaternary structure, component of the subcortical maternal complex (SCMC), at least composed of NLRP5, KHDC3L, OOEP, and TLE6. Within the complex, interacts with NLRP5, KHDC3L and TLE6. The SCMC may facilitate translocation of its components between the nuclear and cytoplasmic compartments. Forms a scaffold complex with OOEP/FLOPED, and interacts with BLM and TRIM25 at DNA replication forks. Interacts with PARP1; the interaction is increased following the formation of DNA double-strand breaks. Interacts with NUMA1.

The protein localises to the cytoplasm. It localises to the cell cortex. It is found in the nucleus. Its subcellular location is the mitochondrion. The protein resides in the cytoskeleton. The protein localises to the microtubule organizing center. It localises to the centrosome. It is found in the chromosome. Its function is as follows. Component of the subcortical maternal complex (SCMC), a multiprotein complex that plays a key role in early embryonic development. The SCMC complex is a structural constituent of cytoplasmic lattices, which consist in fibrous structures found in the cytoplasm of oocytes and preimplantation embryos. They are required to store maternal proteins critical for embryonic development, such as proteins that control epigenetic reprogramming of the preimplantation embryo, and prevent their degradation or activation. KHDC3 ensures proper spindle assembly by regulating the localization of AURKA via RHOA signaling and of PLK1 via a RHOA-independent process. Required for the localization of MAD2L1 to kinetochores to enable spindle assembly checkpoint function. As part of the OOEP-KHDC3 scaffold, recruits BLM and TRIM25 to DNA replication forks, thereby promoting the ubiquitination of BLM by TRIM25, enhancing BLM retainment at replication forks and therefore promoting stalled replication fork restart. Regulates homologous recombination-mediated DNA repair via recruitment of RAD51 to sites of DNA double-strand breaks, and sustainment of PARP1 activity, which in turn modulates downstream ATM or ATR activation. Activation of ATM or ATR in response to DNA double-strand breaks may be cell-type specific. Its role in DNA double-strand break repair is independent of its role in restarting stalled replication forks. Promotes neural stem cell neurogenesis and neuronal differentiation in the hippocampus. May regulate normal development of learning, memory and anxiety. Capable of binding RNA. This is KH domain-containing protein 3 (KHDC3L) from Macaca mulatta (Rhesus macaque).